A 204-amino-acid chain; its full sequence is B9 domain-containing protein 1 (204 aa).

Residues 9–127 (FLLMITGQVE…TIPMFVPEST (119 aa)) form the C2 B9-type domain.

This sequence belongs to the B9D family. As to quaternary structure, part of the tectonic-like complex (also named B9 complex).

It is found in the cytoplasm. The protein localises to the cytoskeleton. It localises to the cilium basal body. Its function is as follows. Component of the tectonic-like complex, a complex localized at the transition zone of primary cilia and acting as a barrier that prevents diffusion of transmembrane proteins between the cilia and plasma membranes. Required for ciliogenesis and sonic hedgehog/SHH signaling. This is B9 domain-containing protein 1 (B9d1) from Mus musculus (Mouse).